We begin with the raw amino-acid sequence, 832 residues long: Protein P (832 aa).

The segment at 1 to 177 is terminal protein domain (TP); the sequence is MPLSYQHFRR…FCGSPYSWEQ (177 aa). Residues 178–335 form a spacer region; sequence KLQHGAESFH…YCLSHIVNLL (158 aa). 2 disordered regions span residues 186-229 and 275-305; these read FHQQ…QGRS and YPTV…RSQS. Residues 336-679 form a polymerase/reverse transcriptase domain (RT) region; that stretch reads EDWGPCTEHG…YMNLYPVARQ (344 aa). The region spanning 346–589 is the Reverse transcriptase domain; that stretch reads EHHIRIPRTP…YSLHFMGYVI (244 aa). Residues D418, D540, and D541 each contribute to the Mg(2+) site.

It belongs to the hepadnaviridae P protein family.

It carries out the reaction DNA(n) + a 2'-deoxyribonucleoside 5'-triphosphate = DNA(n+1) + diphosphate. The enzyme catalyses Endonucleolytic cleavage to 5'-phosphomonoester.. Its activity is regulated as follows. Activated by host HSP70 and HSP40 in vitro to be able to bind the epsilon loop of the pgRNA. Because deletion of the RNase H region renders the protein partly chaperone-independent, the chaperones may be needed indirectly to relieve occlusion of the RNA-binding site by this domain. Inhibited by several reverse-transcriptase inhibitors: Lamivudine, Adefovir and Entecavir. Functionally, multifunctional enzyme that converts the viral RNA genome into dsDNA in viral cytoplasmic capsids. This enzyme displays a DNA polymerase activity that can copy either DNA or RNA templates, and a ribonuclease H (RNase H) activity that cleaves the RNA strand of RNA-DNA heteroduplexes in a partially processive 3'- to 5'-endonucleasic mode. Neo-synthesized pregenomic RNA (pgRNA) are encapsidated together with the P protein, and reverse-transcribed inside the nucleocapsid. Initiation of reverse-transcription occurs first by binding the epsilon loop on the pgRNA genome, and is initiated by protein priming, thereby the 5'-end of (-)DNA is covalently linked to P protein. Partial (+)DNA is synthesized from the (-)DNA template and generates the relaxed circular DNA (RC-DNA) genome. After budding and infection, the RC-DNA migrates in the nucleus, and is converted into a plasmid-like covalently closed circular DNA (cccDNA). The activity of P protein does not seem to be necessary for cccDNA generation, and is presumably released from (+)DNA by host nuclear DNA repair machinery. In Homo sapiens (Human), this protein is Protein P.